A 1039-amino-acid polypeptide reads, in one-letter code: Probable calcium-transporting ATPase 9, plasma membrane-type (1039 aa).

Residues 1–175 are Cytoplasmic-facing; that stretch reads MEKLDRYLQE…FVWDALQDMT (175 aa). Helical transmembrane passes span 176-196 and 199-219; these read LIIL…TEGW and GMYD…VTAV. Residues 220-250 lie on the Cytoplasmic side of the membrane; it reads SDYKQSLQFKELDNEKKKIFIHVTRDGRRQK. A run of 2 helical transmembrane segments spans residues 251–271 and 353–373; these read ISIY…DQVP and VATI…LVLL. Residues 374 to 406 lie on the Cytoplasmic side of the membrane; the sequence is VRFLIDKGMTVGLLKWYSTDALTIVNYFATAVT. Residues 407–427 form a helical membrane-spanning segment; it reads IIVVAVPEGLPLAVTLSLAFA. Asp-456 acts as the 4-aspartylphosphate intermediate in catalysis. 2 residues coordinate Mg(2+): Asp-758 and Asp-762. A helical transmembrane segment spans residues 825–845; it reads IVALVINFVSACIIGSAPLTA. The Cytoplasmic portion of the chain corresponds to 846–847; the sequence is VQ. 2 helical membrane passes run 848–868 and 892–912; these read LLWV…TEPP and NIMG…FGGE. Residues 913–960 are Cytoplasmic-facing; that stretch reads RLLNIKGADSKSIINTLIFNSFVFCQVFNEINSREMQKINVFRGIISN. 2 helical membrane-spanning segments follow: residues 961–981 and 995–1015; these read WIFI…IEFL and WLLS…LKCI. Over 1016-1039 the chain is Cytoplasmic; the sequence is PVGSGETSATPNGYRPLANGPDDI.

The protein belongs to the cation transport ATPase (P-type) (TC 3.A.3) family. Type IIB subfamily.

The protein localises to the membrane. The catalysed reaction is Ca(2+)(in) + ATP + H2O = Ca(2+)(out) + ADP + phosphate + H(+). Activated by calmodulin. Functionally, this magnesium-dependent enzyme catalyzes the hydrolysis of ATP coupled with the translocation of calcium from the cytosol out of the cell, into the endoplasmic reticulum, or into organelles. The sequence is that of Probable calcium-transporting ATPase 9, plasma membrane-type from Oryza sativa subsp. japonica (Rice).